We begin with the raw amino-acid sequence, 92 residues long: Putative pterin-4-alpha-carbinolamine dehydratase (92 aa).

It belongs to the pterin-4-alpha-carbinolamine dehydratase family.

The catalysed reaction is (4aS,6R)-4a-hydroxy-L-erythro-5,6,7,8-tetrahydrobiopterin = (6R)-L-erythro-6,7-dihydrobiopterin + H2O. This chain is Putative pterin-4-alpha-carbinolamine dehydratase, found in Picosynechococcus sp. (strain ATCC 27264 / PCC 7002 / PR-6) (Agmenellum quadruplicatum).